The primary structure comprises 140 residues: Cytochrome B5 isoform D (140 aa).

The 77-residue stretch at 5–81 (GKVFTLSEVS…LDEYYVGDID (77 aa)) folds into the Cytochrome b5 heme-binding domain. Heme-binding residues include histidine 40 and histidine 64. Residues 109 to 129 (FVIKLLQFLVPLLILGLAFGI) form a helical membrane-spanning segment.

This sequence belongs to the cytochrome b5 family. Interacts with CER1, BI-1, FAH1 and FAH2. In terms of tissue distribution, expressed in roots, stems, leaves, flowers and siliques.

It is found in the endoplasmic reticulum membrane. Membrane bound hemoprotein which function as an electron carrier for several membrane bound oxygenases, including fatty acid desaturases. The protein is Cytochrome B5 isoform D of Arabidopsis thaliana (Mouse-ear cress).